Consider the following 218-residue polypeptide: Leucine-rich repeat protein 2 (218 aa).

Residues 1 to 27 form the signal peptide; it reads MVAQNSRRELLAASLILTLALIRLTEA. LRR repeat units follow at residues 69-93, 94-117, 119-141, 142-165, and 167-190; these read HHQV…LGKL, EHLQ…LGNL, SLIS…LGKL, KSLV…LTVI, and SLKV…PFEH.

Its function is as follows. Probably involved in plant defense response. The protein is Leucine-rich repeat protein 2 of Arabidopsis thaliana (Mouse-ear cress).